Here is a 254-residue protein sequence, read N- to C-terminus: Phosphorelay intermediate protein rdeA (254 aa).

Residues Glu-26–Trp-123 enclose the HPt domain. His-65 is modified (phosphohistidine). Residues Asp-124–Lys-254 are disordered. Acidic residues predominate over residues Gly-131–Pro-143. Over residues Asn-146–Ser-160 the composition is skewed to low complexity. A compositionally biased stretch (basic and acidic residues) spans Lys-166–Lys-186. A compositionally biased stretch (low complexity) spans Asn-220–Ser-238. The span at Lys-239–Lys-254 shows a compositional bias: polar residues.

The phosphorelay mechanism involves the sequential transfer of a phosphate group from 'Asp-212' of pde2 to His-65 of rdeA. In vitro, dephosphorylated by dokA.

Its subcellular location is the cytoplasm. In terms of biological role, phosphorelay protein that supplies phosphate to regA or accepts phosphate from regA; depending on the relative concentration of the phosphodonor proteins. In vitro, acts as a substrate for cheA (bacterial kinase). Plays a role in the development. ypd1 (yeast) can complement rdeA defect. This is Phosphorelay intermediate protein rdeA (rdeA) from Dictyostelium discoideum (Social amoeba).